The sequence spans 878 residues: MRPDHMNFCCLCAAILSSTAVLFGQDPLGETALLTKNPNHVVCTFFEDCTMESLFPALCAHASQDDPLYVLGNSYCWFVSKLHITDPKEALFKEKGDLSIQNFRFLSFTDCSSKESSPSIIHQKNGQLSLRNNGSMSFCRNHAEGSGGAISADAFSLQHNYLFTAFEENSSKGNGGAIQAQTFSLSRNVSPISFARNRADLNGGAICCSNLICSGNVNPLFFTGNSATNGGAICCISDLNTSEKGSLSLACNQETLFASNSAKEKGGAIYAKHMVLRYNGPVSFINNSAKIGGAIAIQSGGSLSILAGEGSVLFQNNSQRTSDQGLVRNAIYLEKDAILSSLEARNGDILFFDPIVQESSSKESPLPSSLQASVTSPTPATASPLVIQTSANRSVIFSSERLSEEEKTPDNLTSQLQQPIELKSGRLVLKDRAVLSAPSLSQDPQALLIMEAGTSLKTSSDLKLATLSIPLHSLDTEKSVTIHAPNLSIQKIFLSNSGDENFYENVELLSKEQNNIPLLTLSKEQSHLHLPDGNLSSHFGYQGDWTFSWKDSDEGHSLIANWTPKNYVPHPERQSTLVANTLWNTYSDMQAVQSMINTIAHGGAYLFGTWGSAVSNLFYAHDSSGKPIDNWHHRSLGYLFGISTHSLDDHSFCLAAGQLLGKSSDSFITSTETTSYIATVQAQLATPLMKISAQACYNESIHELKTKYRSFSKEGFGSWHSVAVSGEVCASIPIVSNGSGLFSSFSIFSKLQGFSGTQDGFEESSGEIRSFSASSFRNISLPMGITFEKKSQKTRNYYYFLGAYIQDLKRDVESGPVVLLKNAVSWDAPMANLDSRAYMFRLTNQRALHRLQTLLNVSYVLRGQSHSYSLDLGTTYRF.

The N-terminal stretch at 1–24 (MRPDHMNFCCLCAAILSSTAVLFG) is a signal peptide. The segment covering 360–371 (SSKESPLPSSLQ) has biased composition (low complexity). A disordered region spans residues 360-381 (SSKESPLPSSLQASVTSPTPAT). The span at 372–381 (ASVTSPTPAT) shows a compositional bias: polar residues. The Autotransporter domain occupies 602–878 (GGAYLFGTWG…SLDLGTTYRF (277 aa)).

This sequence belongs to the PMP outer membrane protein family.

It is found in the secreted. The protein localises to the cell wall. Its subcellular location is the cell outer membrane. The chain is Probable outer membrane protein PmpI (pmpI) from Chlamydia trachomatis serovar D (strain ATCC VR-885 / DSM 19411 / UW-3/Cx).